The primary structure comprises 2078 residues: Nascent polypeptide-associated complex subunit alpha, muscle-specific form (2078 aa).

Disordered stretches follow at residues 1–21, 37–96, 595–614, and 732–1944; these read MPGEATETVPATEQELPQPQA, ALGQ…LGTA, LGEPLPIGKPASSMTSPLGV, and KSVP…KAMS. 2 stretches are compositionally biased toward polar residues: residues 9-21 and 60-75; these read VPATEQELPQPQA and AANQASPFPSPSTIAS. A compositionally biased stretch (low complexity) spans 775-786; sequence SGASATASSKGT. Over residues 837–847 the composition is skewed to polar residues; sequence PENSLSFQGSK. Residue Ser-917 is modified to Phosphoserine. Over residues 933–1020 the composition is skewed to pro residues; that stretch reads SPSPKGAPTP…PPAVTPPSPK (88 aa). A compositionally biased stretch (low complexity) spans 1045-1067; it reads GSPAATPLPKGAPTTPAATLPSP. Over residues 1080–1113 the composition is skewed to pro residues; it reads PTPPAATPPSPKGGPATPSPKGAPMPPAATPPSP. Residues 1114-1130 are compositionally biased toward low complexity; the sequence is KGGLATPPHKGAPTTPA. Composition is skewed to pro residues over residues 1131–1147 and 1154–1170; these read ATPPSPKGGLATPPPKG. Ser-1181 is subject to Phosphoserine. 3 stretches are compositionally biased toward low complexity: residues 1183-1199, 1206-1222, and 1229-1245; these read KGGLATPSPKGAPTTPA. Composition is skewed to pro residues over residues 1246-1270 and 1292-1344; these read ATPPSPKGGPATPPPKGAPTPPAAT and VTPP…PSPK. The span at 1345-1366 shows a compositional bias: low complexity; it reads GTPTLPATTPSSKGGPTTPSSK. Phosphoserine is present on residues Ser-1397 and Ser-1474. Over residues 1470–1481 the composition is skewed to pro residues; the sequence is VTPPSPKEPPAP. Residues 1485 to 1507 are compositionally biased toward low complexity; that stretch reads ATSSSPKKAPATPAPMGAPTLPA. Residues 1611–1625 are compositionally biased toward pro residues; the sequence is KEAPTPPAVTPPSPE. A compositionally biased stretch (low complexity) spans 1626–1637; it reads KGPATPAPKGTP. Residues 1647-1656 show a composition bias toward polar residues; the sequence is LKDSPTSPAS. Residues 1744-1756 show a composition bias toward basic and acidic residues; that stretch reads DSSKTAKGKDASH. Positions 1794 to 1811 are enriched in pro residues; the sequence is PSPPVSLPLAPSPVPTLP. Positions 1841-1845 match the PXLXP motif; that stretch reads LPLIP. The span at 1876–1891 shows a compositional bias: polar residues; sequence SAKQPVTKNNKGSGTE. The span at 1892–1905 shows a compositional bias: acidic residues; the sequence is SDSDESVPELEEQD. A Phosphoserine; by ILK1 modification is found at Ser-1906. Residues 1907–1920 show a composition bias toward low complexity; sequence TQATTQQAQLAAAA. A required for DNA-binding region spans residues 1932 to 1943; it reads QSRSEKKARKAM. The NAC-A/B domain occupies 1933–1998; the sequence is SRSEKKARKA…AKIEDLSQQA (66 aa). The residue at position 1995 (Ser-1995) is a Phosphoserine. Lys-2005 carries the N6-acetyllysine; alternate modification. Residue Lys-2005 forms a Glycyl lysine isopeptide (Lys-Gly) (interchain with G-Cter in SUMO2); alternate linkage. The residue at position 2022 (Thr-2022) is a Phosphothreonine; by GSK3-beta. The residue at position 2024 (Thr-2024) is a Phosphothreonine. Ser-2029, Ser-2049, Ser-2054, and Ser-2066 each carry phosphoserine. Residues 2039–2078 enclose the UBA domain; it reads VEVKDIELVMSQANVSRAKAVRALKNNSNDIVNAIMELTM.

As to quaternary structure, interacts (via PXLXP motif) with the muscle-restricted histone methyltransferase SMYD1 (via MYND-type zinc finger).

Its subcellular location is the cytoplasm. The protein localises to the nucleus. Functionally, cardiac- and muscle-specific transcription factor. May act to regulate the expression of genes involved in the development of myotubes. Plays a critical role in ventricular cardiomyocyte expansion and regulates postnatal skeletal muscle growth and regeneration. Involved in the organized assembly of thick and thin filaments of myofibril sarcomeres. The polypeptide is Nascent polypeptide-associated complex subunit alpha, muscle-specific form (NACA) (Homo sapiens (Human)).